Here is a 538-residue protein sequence, read N- to C-terminus: Putative cysteine ligase BshC (538 aa).

Residues 248-268 (ISKYKEVQEGLRNQQEVIKEL) are a coiled coil.

This sequence belongs to the BshC family.

Its function is as follows. Involved in bacillithiol (BSH) biosynthesis. May catalyze the last step of the pathway, the addition of cysteine to glucosamine malate (GlcN-Mal) to generate BSH. The polypeptide is Putative cysteine ligase BshC (Bacillus cereus (strain B4264)).